Consider the following 568-residue polypeptide: Mannitol 2-dehydrogenase (568 aa).

Position 109–120 (109–120 (IVHVGVGGFHRA)) interacts with NAD(+).

The protein belongs to the mannitol dehydrogenase family. Monomer.

The catalysed reaction is D-mannitol + NAD(+) = D-fructose + NADH + H(+). In terms of biological role, catalyzes the NAD(H)-dependent interconversion of D-fructose and D-mannitol in the mannitol metabolic pathway. In Phaeosphaeria nodorum (strain SN15 / ATCC MYA-4574 / FGSC 10173) (Glume blotch fungus), this protein is Mannitol 2-dehydrogenase.